The following is a 261-amino-acid chain: Calbindin (261 aa).

At A2 the chain carries N-acetylalanine. Residues 2-7 (AESHLQ) are interaction with RANBP9. EF-hand domains are found at residues 11-46 (ITAS…LLQA), 53-88 (ELSP…EENF), 98-133 (KSCE…LLEK), 142-177 (KLAE…QENF), and 186-221 (MCGK…LCEK). Residues D24, D26, S28, Y30, and E35 each coordinate Ca(2+). 14 residues coordinate Ca(2+): D111, D113, S115, E122, D155, N157, D159, K161, E166, D199, D201, N203, Y205, and E210.

It belongs to the calbindin family. Interacts with RANBP9. As to expression, expressed in the modiolar nerve root and in bushy neurons in the ventral cochlear nucleus (at protein level).

Its function is as follows. Buffers cytosolic calcium. May stimulate a membrane Ca(2+)-ATPase and a 3',5'-cyclic nucleotide phosphodiesterase. The sequence is that of Calbindin (Calb1) from Mus musculus (Mouse).